We begin with the raw amino-acid sequence, 871 residues long: MDQHHGARGGAPIRRPRRSIESRSHPFRATGNTQRTYSTPRLSYRDGLSGRTASRDPQEQASNQDESSNPSTSNAQQSTSFWGYLRRVFSDDVPAQPQAPRPRADFAPPAGEESSSEEEEEEGPAQAPLDEEDQLMYADQYSVGDSSDENDEEEDPRLGSDYPTSAESSEYHDHGEMVAGAGAESESETDIDAEEEEEDDEDDEDDMEVIRDESYRLPRTWLDKSIRLMDEALAQSSELSKAITKSTRSLYDSQFAPGGRGYTQTATPSRRLVQLSRAGMYDSDKIVMTGDYMEVDDDPDSAYQSWVRAIRHPLAMNPSWEETISNHTNPSFSTDIDYDIDELIEKNLARTPPVFEGLLDSAEFFYKLPMLYTYATITQDEAYEERLAWSNTQALHGHEQSSWQALLVYYSRGGMYVSPTQEPRGIWRRALKQAMALQLKMCVLGLSDVVTKQNATHHHAAVTFLVDALLRTARNCYLASRLLVFAWERRRETGAKRPAEPLIALSGVTLLQPLPPEVSELLEQRTFDIGLRTPNSAVFRAFFGSLVYWAELRLALRDPASINCRYVGFHLQTSEIYLLARAHSASPGYTKEELVAMEAILTLATLMLEVALQWVHVACAQLLSENDTIKAFRRVSASIPHALAPLGSIRLHDAEFEVLSNPDVMVARDETALSQALFLGYFSVRTALTACMRDYSHEADGGSKETVTGVFLGVGLILQRLAGHLNFLLNCLAGAALYGGQKINIHSLTLPRYSLLADVMAPMLQRQSLVDFWRARDNMLEDLEITPRPGPPTQGKRVVVEMPLPSDDLPDMTPGASVNNGAGLGRMVDMAKQLQHYRETIIGEEATSSVGKRGLIRAGVGVAALRGRRRK.

A disordered region spans residues 1–212 (MDQHHGARGG…DEDDMEVIRD (212 aa)). The Nuclear localization signal signature appears at 13–33 (IRRPRRSIESRSHPFRATGNT). Polar residues-rich tracts occupy residues 30–41 (TGNTQRTYSTPR) and 59–81 (EQAS…STSF). Composition is skewed to acidic residues over residues 114 to 134 (SSSE…EEDQ), 146 to 155 (SSDENDEEED), and 185 to 207 (SESE…EDDM).

The protein belongs to the alphaherpesvirinae HHV-1 UL47 family. In terms of assembly, interacts with US3 kinase. Interacts with UL31 and UL34; these interactions seem important for efficient virion nuclear egress. Interacts with UL41/VHS. Post-translationally, phosphorylated by US3. This phosphorylation is required for proper nuclear localization.

Its subcellular location is the virion tegument. The protein localises to the host nucleus. The protein resides in the host cytoplasm. In terms of biological role, tegument protein that can bind to various RNA transcripts. Plays a role in the attenuation of selective viral and cellular mRNA degradation by modulating the activity of host shutoff RNase UL41/VHS. Also plays a role in the primary envelopment of virions in the perinuclear space, probably by interacting with two nuclear egress proteins UL31 and UL34. The polypeptide is Tegument protein UL47 homolog (Equus caballus (Horse)).